Reading from the N-terminus, the 254-residue chain is Protein Thf1 (254 aa).

Positions glutamate 182–glutamine 241 form a coiled coil. The segment covering glutamine 215 to threonine 228 has biased composition (basic and acidic residues). Residues glutamine 215–alanine 254 form a disordered region.

This sequence belongs to the THF1 family.

May be involved in photosynthetic membrane biogenesis. The sequence is that of Protein Thf1 from Picosynechococcus sp. (strain ATCC 27264 / PCC 7002 / PR-6) (Agmenellum quadruplicatum).